The chain runs to 314 residues: Malate dehydrogenase (314 aa).

NAD(+) contacts are provided by residues 12 to 17 (GSGFTG) and Asp-36. Residues Arg-87 and Arg-93 each coordinate substrate. NAD(+) is bound by residues Asn-100 and 123-125 (LTN). Residue Asn-125 coordinates substrate. Ser-149 is subject to Phosphoserine. Substrate is bound at residue Arg-156. His-180 (proton acceptor) is an active-site residue.

The protein belongs to the LDH/MDH superfamily. MDH type 3 family.

The enzyme catalyses (S)-malate + NAD(+) = oxaloacetate + NADH + H(+). Its function is as follows. Catalyzes the reversible oxidation of malate to oxaloacetate. This chain is Malate dehydrogenase, found in Shouchella clausii (strain KSM-K16) (Alkalihalobacillus clausii).